A 91-amino-acid polypeptide reads, in one-letter code: Potassium channel toxin AaTXK-beta (91 aa).

Positions 1 to 19 are cleaved as a signal peptide; that stretch reads MQRNLVVLLFLGMVALSSC. Positions 20 to 27 are excised as a propeptide; the sequence is GLREKHVQ. The 38-residue stretch at 54-91 folds into the BetaSPN-type CS-alpha/beta domain; it reads QFGCPAYQGYCDDHCQDIKKEEGFCHGFKCKCGIPMGF. 3 cysteine pairs are disulfide-bonded: cysteine 57–cysteine 78, cysteine 64–cysteine 83, and cysteine 68–cysteine 85.

It belongs to the long chain scorpion toxin family. Class 1 subfamily. Monomer (both chains). As to expression, expressed by the venom gland.

Its subcellular location is the secreted. In terms of biological role, inhibits voltage-gated potassium channels (Kv). Does not activate Kv7 channels. Functionally, peptide activator of Kv7.4/KCNQ4 channels. Also acts as a subtype-selective activator of channels formed by Kv7.3/KCNQ3, Kv7.2/Kv7.3 (KCNQ2/KCNQ3), Kv7.5/Kv7.3 (KCNQ3/KCNQ5) subunits. The sequence is that of Potassium channel toxin AaTXK-beta from Androctonus australis (Sahara scorpion).